The sequence spans 396 residues: 1-deoxy-D-xylulose 5-phosphate reductoisomerase (396 aa).

The NADPH site is built by threonine 13, glycine 14, serine 15, isoleucine 16, and asparagine 127. Lysine 128 contributes to the 1-deoxy-D-xylulose 5-phosphate binding site. Residue glutamate 129 coordinates NADPH. Aspartate 153 lines the Mn(2+) pocket. Positions 154, 155, 184, and 207 each coordinate 1-deoxy-D-xylulose 5-phosphate. Glutamate 155 lines the Mn(2+) pocket. Glycine 213 is a binding site for NADPH. 4 residues coordinate 1-deoxy-D-xylulose 5-phosphate: serine 220, asparagine 225, lysine 226, and glutamate 229. Glutamate 229 is a binding site for Mn(2+).

It belongs to the DXR family. Mg(2+) serves as cofactor. Requires Mn(2+) as cofactor.

The catalysed reaction is 2-C-methyl-D-erythritol 4-phosphate + NADP(+) = 1-deoxy-D-xylulose 5-phosphate + NADPH + H(+). It functions in the pathway isoprenoid biosynthesis; isopentenyl diphosphate biosynthesis via DXP pathway; isopentenyl diphosphate from 1-deoxy-D-xylulose 5-phosphate: step 1/6. Its function is as follows. Catalyzes the NADPH-dependent rearrangement and reduction of 1-deoxy-D-xylulose-5-phosphate (DXP) to 2-C-methyl-D-erythritol 4-phosphate (MEP). This chain is 1-deoxy-D-xylulose 5-phosphate reductoisomerase, found in Pseudomonas fluorescens (strain Pf0-1).